The following is a 104-amino-acid chain: Large ribosomal subunit protein uL24 (104 aa).

Belongs to the universal ribosomal protein uL24 family. In terms of assembly, part of the 50S ribosomal subunit.

One of two assembly initiator proteins, it binds directly to the 5'-end of the 23S rRNA, where it nucleates assembly of the 50S subunit. Its function is as follows. One of the proteins that surrounds the polypeptide exit tunnel on the outside of the subunit. This chain is Large ribosomal subunit protein uL24, found in Bradyrhizobium sp. (strain BTAi1 / ATCC BAA-1182).